The chain runs to 1169 residues: Pesticidal crystal protein Cry8Ba (1169 aa).

Positions methionine 1–arginine 26 are disordered. Residues threonine 15–asparagine 25 are compositionally biased toward polar residues.

Belongs to the delta endotoxin family.

Functionally, promotes colloidosmotic lysis by binding to the midgut epithelial cells of insects. Active on various scarabaeid beetles. This Bacillus thuringiensis serovar kumamotoensis protein is Pesticidal crystal protein Cry8Ba (cry8Ba).